Consider the following 432-residue polypeptide: Mannan endo-1,4-beta-mannosidase 1 (432 aa).

The first 28 residues, 1-28, serve as a signal peptide directing secretion; the sequence is MRLLGAHRAALLVLACVVVVVIHGLGEA. Substrate-binding residues include tryptophan 93 and asparagine 209. The active-site Proton donor is the glutamate 210. Residue tyrosine 289 participates in substrate binding. The active-site Nucleophile is glutamate 329. Tryptophan 371 provides a ligand contact to substrate.

This sequence belongs to the glycosyl hydrolase 5 (cellulase A) family. In terms of tissue distribution, ubiquitous.

It is found in the secreted. The catalysed reaction is Random hydrolysis of (1-&gt;4)-beta-D-mannosidic linkages in mannans, galactomannans and glucomannans.. This is Mannan endo-1,4-beta-mannosidase 1 (MAN1) from Oryza sativa subsp. japonica (Rice).